The following is a 526-amino-acid chain: Rho guanine nucleotide exchange factor 3 (526 aa).

Residues 20-40 (ELPPASGPAKDAEEPSNKRVK) are disordered. Residues Ser47 and Ser70 each carry the phosphoserine modification. Residues 122-304 (KRQEAIFELS…QGIVAEINTK (183 aa)) enclose the DH domain. A PH domain is found at 291-449 (INIIQGIVAE…WLNCIRQAKE (159 aa)). Residues 464 to 526 (EGSFLNPTTG…GNSRHGESNV (63 aa)) are disordered. Residues 466-475 (SFLNPTTGSR) show a composition bias toward polar residues.

As to quaternary structure, interacts with RHOA and RHOB.

It is found in the cytoplasm. Its function is as follows. Acts as a guanine nucleotide exchange factor (GEF) for RhoA and RhoB GTPases. This is Rho guanine nucleotide exchange factor 3 (ARHGEF3) from Pongo abelii (Sumatran orangutan).